The chain runs to 326 residues: Isoaspartyl peptidase/L-asparaginase (326 aa).

The Nucleophile role is filled by T185. Substrate-binding positions include 213–216 (RVGD) and 236–239 (TGHG).

The protein belongs to the Ntn-hydrolase family. Heterodimer of an alpha and beta chain produced by autocleavage. This heterodimer may then dimerize in turn, giving rise to a heterotetramer. In terms of processing, cleaved into an alpha and beta chain by autocatalysis; this activates the enzyme. The N-terminal residue of the beta subunit is responsible for the nucleophile hydrolase activity. High expression in the heart and brain while low to minimal expression in the other tissues. In ocular tissues, high levels is observed in the optic nerve and retina while relatively low levels of expression are detected in the iris-ciliary body, lens or retinal pigment epithelium.

Its subcellular location is the cytoplasm. The enzyme catalyses L-asparagine + H2O = L-aspartate + NH4(+). The catalysed reaction is Cleavage of a beta-linked Asp residue from the N-terminus of a polypeptide.. Functionally, has both L-asparaginase and beta-aspartyl peptidase activity. May be involved in the production of L-aspartate, which can act as an excitatory neurotransmitter in some brain regions. Is highly active with L-Asp beta-methyl ester. Besides, has catalytic activity toward beta-aspartyl dipeptides and their methyl esters, including beta-L-Asp-L-Phe, beta-L-Asp-L-Phe methyl ester (aspartame), beta-L-Asp-L-Ala, beta-L-Asp-L-Leu and beta-L-Asp-L-Lys. Does not have aspartylglucosaminidase activity and is inactive toward GlcNAc-L-Asn. Likewise, has no activity toward glutamine. The chain is Isoaspartyl peptidase/L-asparaginase (Asrgl1) from Mus musculus (Mouse).